The primary structure comprises 331 residues: Adenosine deaminase (331 aa).

2 residues coordinate Zn(2+): His-12 and His-14. Substrate contacts are provided by His-14, Asp-16, and Gly-170. His-197 is a binding site for Zn(2+). The Proton donor role is filled by Glu-200. Asp-278 contributes to the Zn(2+) binding site.

It belongs to the metallo-dependent hydrolases superfamily. Adenosine and AMP deaminases family. Adenosine deaminase subfamily. Zn(2+) serves as cofactor.

It catalyses the reaction adenosine + H2O + H(+) = inosine + NH4(+). The catalysed reaction is 2'-deoxyadenosine + H2O + H(+) = 2'-deoxyinosine + NH4(+). Its function is as follows. Catalyzes the hydrolytic deamination of adenosine and 2-deoxyadenosine. The chain is Adenosine deaminase from Vibrio vulnificus (strain CMCP6).